Here is a 315-residue protein sequence, read N- to C-terminus: Thioredoxin reductase (315 aa).

34-41 contributes to the FAD binding site; that stretch reads EGMKVGGQ. The cysteines at positions 134 and 137 are disulfide-linked. 282 to 291 is an FAD binding site; the sequence is DIRVKSLRQV.

Belongs to the class-II pyridine nucleotide-disulfide oxidoreductase family. Homodimer. Requires FAD as cofactor.

It localises to the cytoplasm. It catalyses the reaction [thioredoxin]-dithiol + NADP(+) = [thioredoxin]-disulfide + NADPH + H(+). In Peptoclostridium litorale (Clostridium litorale), this protein is Thioredoxin reductase (trxB).